Reading from the N-terminus, the 391-residue chain is Ferrochelatase (391 aa).

Positions 196 and 281 each coordinate Fe cation.

It belongs to the ferrochelatase family.

The protein localises to the cytoplasm. It carries out the reaction heme b + 2 H(+) = protoporphyrin IX + Fe(2+). It participates in porphyrin-containing compound metabolism; protoheme biosynthesis; protoheme from protoporphyrin-IX: step 1/1. Functionally, catalyzes the ferrous insertion into protoporphyrin IX. This is Ferrochelatase from Synechococcus sp. (strain CC9311).